The primary structure comprises 141 residues: Nucleoside diphosphate kinase (141 aa).

6 residues coordinate ATP: lysine 11, phenylalanine 59, arginine 87, threonine 93, arginine 104, and asparagine 114. The Pros-phosphohistidine intermediate role is filled by histidine 117.

The protein belongs to the NDK family. Homotetramer. Requires Mg(2+) as cofactor.

The protein localises to the cytoplasm. The enzyme catalyses a 2'-deoxyribonucleoside 5'-diphosphate + ATP = a 2'-deoxyribonucleoside 5'-triphosphate + ADP. It carries out the reaction a ribonucleoside 5'-diphosphate + ATP = a ribonucleoside 5'-triphosphate + ADP. Major role in the synthesis of nucleoside triphosphates other than ATP. The ATP gamma phosphate is transferred to the NDP beta phosphate via a ping-pong mechanism, using a phosphorylated active-site intermediate. This Histophilus somni (strain 2336) (Haemophilus somnus) protein is Nucleoside diphosphate kinase.